Here is a 165-residue protein sequence, read N- to C-terminus: Transcription antitermination protein NusB (165 aa).

The protein belongs to the NusB family.

Involved in transcription antitermination. Required for transcription of ribosomal RNA (rRNA) genes. Binds specifically to the boxA antiterminator sequence of the ribosomal RNA (rrn) operons. This chain is Transcription antitermination protein NusB, found in Rhodococcus erythropolis (strain PR4 / NBRC 100887).